The following is a 426-amino-acid chain: Serine--tRNA ligase (426 aa).

231-233 (TLE) is an L-serine binding site. Position 262–264 (262–264 (RSE)) interacts with ATP. Glu-285 lines the L-serine pocket. 349–352 (EISS) is a binding site for ATP. Ser-385 lines the L-serine pocket.

It belongs to the class-II aminoacyl-tRNA synthetase family. Type-1 seryl-tRNA synthetase subfamily. In terms of assembly, homodimer. The tRNA molecule binds across the dimer.

The protein localises to the cytoplasm. It catalyses the reaction tRNA(Ser) + L-serine + ATP = L-seryl-tRNA(Ser) + AMP + diphosphate + H(+). The catalysed reaction is tRNA(Sec) + L-serine + ATP = L-seryl-tRNA(Sec) + AMP + diphosphate + H(+). It functions in the pathway aminoacyl-tRNA biosynthesis; selenocysteinyl-tRNA(Sec) biosynthesis; L-seryl-tRNA(Sec) from L-serine and tRNA(Sec): step 1/1. In terms of biological role, catalyzes the attachment of serine to tRNA(Ser). Is also able to aminoacylate tRNA(Sec) with serine, to form the misacylated tRNA L-seryl-tRNA(Sec), which will be further converted into selenocysteinyl-tRNA(Sec). The chain is Serine--tRNA ligase from Malacoplasma penetrans (strain HF-2) (Mycoplasma penetrans).